Reading from the N-terminus, the 309-residue chain is MEEFGISPGQLVAVFWDKSSPEEALKKLVARLQELTGSEGQVFMENVTQLLQSSHKESSFDVILSGVVPGSTSLHSAEVLAEMARILRPGGCLFLKEPVETAEVNNDKMKTASKLCSALTLSGLVEIKELQREALSPEEVQSVQEHLGYHSDSLRSVRVTGKKPNFEVGSSSQLKLPNKKSSSVKPVVDPAAAKLWTLSANDMEDDSVDLIDSDELLDPEDLKRPDPASLKAPSCGEGKKRKACKNCTCGLAEELEREQSKAQSSQPKSACGNCYLGDAFRCANCPYLGMPAFKPGEQVLLSNSNLQDA.

The N-terminal SAM-like domain stretch occupies residues 6-172 (ISPGQLVAVF…KPNFEVGSSS (167 aa)). Residues 173-222 (QLKLPNKKSSSVKPVVDPAAAKLWTLSANDMEDDSVDLIDSDELLDPEDL) form a linker region. Residues Ser-182, Ser-183, and Ser-213 each carry the phosphoserine modification. Positions 235, 244, 247, and 249 each coordinate [2Fe-2S] cluster. Residues 235–249 (CGEGKKRKACKNCTC) form a fe-S binding site A region. Phosphoserine is present on Ser-269. [4Fe-4S] cluster contacts are provided by Cys-271, Cys-274, Cys-282, and Cys-285. Short sequence motifs (cx2C motif) lie at residues 271–274 (CGNC) and 282–285 (CANC). The interval 271–285 (CGNCYLGDAFRCANC) is fe-S binding site B. Phosphoserine occurs at positions 302 and 304.

This sequence belongs to the anamorsin family. As to quaternary structure, monomer. Interacts with NDOR1. Interacts with CHCHD4. [2Fe-2S] cluster serves as cofactor. [4Fe-4S] cluster is required as a cofactor.

The protein localises to the cytoplasm. It localises to the nucleus. It is found in the mitochondrion intermembrane space. Functionally, component of the cytosolic iron-sulfur (Fe-S) protein assembly (CIA) machinery required for the maturation of extramitochondrial Fe-S proteins. Part of an electron transfer chain functioning in an early step of cytosolic Fe-S biogenesis, facilitating the de novo assembly of a [4Fe-4S] cluster on the scaffold complex NUBP1-NUBP2. Electrons are transferred to CIAPIN1 from NADPH via the FAD- and FMN-containing protein NDOR1. NDOR1-CIAPIN1 are also required for the assembly of the diferric tyrosyl radical cofactor of ribonucleotide reductase (RNR), probably by providing electrons for reduction during radical cofactor maturation in the catalytic small subunit. Has anti-apoptotic effects in the cell. Involved in negative control of cell death upon cytokine withdrawal. Promotes development of hematopoietic cells. The chain is Anamorsin from Mus musculus (Mouse).